Here is a 379-residue protein sequence, read N- to C-terminus: Stimulator of interferon genes protein (379 aa).

The Cytoplasmic portion of the chain corresponds to 1–17 (MPYSNLHPSIPRPRSYR). A mediates interaction with ZDHHC1 and ZDHHC11 region spans residues 1 to 190 (MPYSNLHPSI…MFNQLHNNML (190 aa)). A helical membrane pass occupies residues 18–34 (FKLAAFVLLVGSLMSLW). Over 35–44 (MTGEPPSHTL) the chain is Lumenal. The chain crosses the membrane as a helical span at residues 45 to 69 (HYLALHVASQQLGLLLKKLCCLAEE). Over 70–91 (LCHVQSRYQGSYWKAVRACVGS) the chain is Cytoplasmic. A lipid anchor (S-palmitoyl cysteine) is attached at Cys88. A helical membrane pass occupies residues 92–106 (PICFMALILLSFYFY). Residues 107–116 (CSLENTSDLR) lie on the Lumenal side of the membrane. A helical transmembrane segment spans residues 117–134 (LAWHLGILVLSKSLSMTL). The Cytoplasmic portion of the chain corresponds to 135–379 (DLQSLAPAEV…QPLPLRTDLI (245 aa)). Lys151 is covalently cross-linked (Glycyl lysine isopeptide (Lys-Gly) (interchain with G-Cter in ubiquitin)). The segment at 153–340 (FNVAHGLAWS…RHIRQEEKEE (188 aa)) is cyclic dinucleotide-binding domain (CBD). 162–167 (SYYIGY) contacts 2',3'-cGAMP. Position 166 (Gly166) interacts with 3',3'-c-di-GMP. Tyr167 serves as a coordination point for 2',3'-cUAMP. A Glycyl lysine isopeptide (Lys-Gly) (interchain with G-Cter in ubiquitin) cross-link involves residue Lys236. Arg238 serves as a coordination point for 2',3'-cUAMP. Residues 238–241 (RAYS) and Thr263 each bind 2',3'-cGAMP. 3',3'-c-di-GMP-binding positions include 238-241 (RAYS) and Thr263. Ser241 bears the Phosphoserine mark. Thr263 provides a ligand contact to 2',3'-cUAMP. Residue Lys338 forms a Glycyl lysine isopeptide (Lys-Gly) (interchain with G-Cter in SUMO) linkage. The interval 340 to 379 (EVTMSGPPTSVAPRPSLLSQEPRLLISGMEQPLPLRTDLI) is C-terminal tail (CTT). Position 355 is a phosphoserine (Ser355). 2 positions are modified to phosphoserine; by TBK1: Ser358 and Ser366. A pLxIS motif motif is present at residues 363–366 (LLIS).

This sequence belongs to the STING family. In terms of assembly, homodimer; forms a homodimer in absence of cyclic nucleotide (c-di-GMP or cGAMP); 'Lys-63'-linked ubiquitination at Lys-151 is required for homodimerization. Homotetramer; in presence of cyclic nucleotide (c-di-GMP or cGAMP), forms tetramers and higher-order oligomers through side-by-side packing. Interacts (when phosphorylated) with IRF3; following activation and phosphorylation on the pLxIS motif by TBK1, recruits IRF3. Interacts with RIGI, MAVS and SSR2. Interacts with RNF5 and TRIM56. Interacts with TBK1; when homodimer, leading to subsequent production of IFN-beta. Interacts with IFIT1 and IFIT2. Interacts with TRIM29; this interaction induces STING1 ubiquitination and subsequent degradation. Associates with the MHC-II complex. Interacts with STEEP1; interaction takes place upon cGAMP-activation and STING1 phosphorylation by MAP3K7/TAK1 and promotes STING1 translocation to COPII vesicles. Interacts with SEC24A, SEC24B and SEC24C; promoting translocation to COPII vesicles. Interacts (when ubiquitinated) with SQSTM1; leading to relocalization to autophagosomes. Interacts with SURF4. Interacts with HNRNPA2B1. Interacts with ZDHHC1; ZDHHC1 constitutively interacts with STING1 and in presence of DNA viruses activates it by promoting its cGAMP-induced oligomerization and the recruitment of downstream signaling components. Interacts with ZDHHC11; in presence of DNA viruses promotes the recruitment of IRF3 to STING1. Interacts with TOMM70. Interacts with TAB1; promoting recruitment of TAB1 to the endoplasmic reticulum membrane and subsequent activation of MAP3K7/TAK1. Interacts (via transmembrane domain) with TMEM203. Interacts with DDX41. Phosphorylation by TBK1 leads to activation and production of IFN-beta. Following cyclic nucleotide (c-di-GMP or cGAMP)-binding, activation and translocation from the endoplasmic reticulum, STING1 is phosphorylated by TBK1 at Ser-366 in the pLxIS motif. The phosphorylated pLxIS motif constitutes an IRF3-binding motif, leading to recruitment of the transcription factor IRF3 to induce type-I interferons and other cytokines. Phosphorylated on tyrosine residues upon MHC-II aggregation. Dephosphorylation by PPP6C leads to inactivation and decreased production of IFN-beta. Phosphorylation at Ser-358 is also required to activate IRF3. Phosphorylation at Ser-355 by MAP3K7/TAK1 facilitates its interaction with STEEP1, promoting STING1 translocation to COPII vesicles. In terms of processing, ubiquitinated. Ubiquitinated via 'Lys-63'-linked ubiquitin chains in response to double-stranded DNA treatment, leading to relocalization to autophagosomes and subsequent degradation; this process is dependent on SQSTM1. 'Lys-63'-linked ubiquitination mediated by TRIM56 at Lys-151 promotes homodimerization and recruitment of the antiviral kinase TBK1 and subsequent production of IFN-beta. 'Lys-48'-linked polyubiquitination at Lys-151 occurring after viral infection is mediated by RNF5 and leads to proteasomal degradation. 'Lys-11'-linked polyubiquitination at Lys-151 by RNF26 leads to stabilize STING1: it protects STING1 from RNF5-mediated 'Lys-48'-linked polyubiquitination. 'Lys-33'-linked and 'Lys-48'-linked deubiquitinated by USP20; leading to its stabilization and promotion of innate antiviral response. 'Lys-48'-linked deubiquitinated by USP44; leading to its stabilization and promotion of innate antiviral response. Deubiquitinated by USP13; leading to inhibition of innate antiviral response. 'Lys-63'-linked deubiquitinated by USP49; leading to inhibition of the subsequent recruitment of TBK1 to the signaling complex. 'Lys-63'-linked ubiquitination mediated by RNF39 promotes the activation of the cGAS-STING pathway. Post-translationally, sumoylated at Lys-338 by TRIM38 during the early phase of viral infection, promoting its stability by preventing its relocalization to autophagosomes and subsequent degradation. Desumoylated by SENP2 during the late phase of viral infection. Palmitoylation takes place in the Golgi apparatus and creates a platform for the recruitment of TBK1.

The protein localises to the endoplasmic reticulum membrane. Its subcellular location is the cytoplasm. It localises to the perinuclear region. It is found in the endoplasmic reticulum-Golgi intermediate compartment membrane. The protein resides in the golgi apparatus membrane. The protein localises to the cytoplasmic vesicle. Its subcellular location is the autophagosome membrane. It localises to the mitochondrion outer membrane. It is found in the cell membrane. The enzyme catalyses H(+)(in) = H(+)(out). In contrast to mouse protein, not activated by anticancer molecule 5,6-dimethylxanthenone 4-acetic acid (DMXAA). In terms of biological role, facilitator of innate immune signaling that acts as a sensor of cytosolic DNA from bacteria and viruses and promotes the production of type I interferon (IFN-alpha and IFN-beta). Innate immune response is triggered in response to non-CpG double-stranded DNA from viruses and bacteria delivered to the cytoplasm. Acts by binding cyclic dinucleotides: recognizes and binds cyclic di-GMP (c-di-GMP), a second messenger produced by bacteria, cyclic UMP-AMP (2',3'-cUAMP), and cyclic GMP-AMP (cGAMP), a messenger produced by CGAS in response to DNA virus in the cytosol. Upon binding to c-di-GMP, cUAMP or cGAMP, STING1 oligomerizes, translocates from the endoplasmic reticulum and is phosphorylated by TBK1 on the pLxIS motif, leading to recruitment and subsequent activation of the transcription factor IRF3 to induce expression of type I interferon and exert a potent anti-viral state. Exhibits 2',3' phosphodiester linkage-specific ligand recognition: can bind both 2'-3' linked cGAMP (2'-3'-cGAMP) and 3'-3' linked cGAMP but is preferentially activated by 2'-3' linked cGAMP. The preference for 2'-3'-cGAMP, compared to other linkage isomers is probably due to the ligand itself, whichs adopts an organized free-ligand conformation that resembles the STING1-bound conformation and pays low energy costs in changing into the active conformation. In addition to promote the production of type I interferons, plays a direct role in autophagy. Following cGAMP-binding, STING1 buds from the endoplasmic reticulum into COPII vesicles, which then form the endoplasmic reticulum-Golgi intermediate compartment (ERGIC). The ERGIC serves as the membrane source for WIPI2 recruitment and LC3 lipidation, leading to formation of autophagosomes that target cytosolic DNA or DNA viruses for degradation by the lysosome. Promotes autophagy by acting as a proton channel that directs proton efflux from the Golgi to facilitate MAP1LC3B/LC3B lipidation. The autophagy- and interferon-inducing activities can be uncoupled and autophagy induction is independent of TBK1 phosphorylation. Autophagy is also triggered upon infection by bacteria: following c-di-GMP-binding, which is produced by live Gram-positive bacteria, promotes reticulophagy. May be involved in translocon function, the translocon possibly being able to influence the induction of type I interferons. May be involved in transduction of apoptotic signals via its association with the major histocompatibility complex class II (MHC-II). The chain is Stimulator of interferon genes protein from Rattus norvegicus (Rat).